The primary structure comprises 377 residues: MEATGLITEYNPFHNGHLYHLKKAQELTKADVTIVLMSGNWVQRGLPAITDKWKRAQAAIDAGADLVFELPFYYAVQAGEIFAQGAVRLLSDLQVSSIICGSEHADIDFINLAAHEPDISGNSNFDKKNRTFASNYAAALEEKTGFYLENANDILAFSYAKAILNQNLTEKIKLRTISRVSADYHDQFLNDGEIASATAIRKALSEGQNVDSYTPMSDLQYTDYEARLFQLLKYRLSTDGLGQIRSIYQVNEGMEYLIKQAIEKNPSDFGELLALIKSKRYTFARLHRVLVYILLNIKVDQMNLAMQNPYHRLLGFTEKGRQYLHEKKGRFNFPTISHVDQKTANKSLAIDYKAGLVYNQIMDYKSTQDIKRTPIQS.

ATP is bound by residues 7–20 (ITEY…HLYH), G101, N152, and R179.

Belongs to the TmcAL family.

Its subcellular location is the cytoplasm. It catalyses the reaction cytidine(34) in elongator tRNA(Met) + acetate + ATP = N(4)-acetylcytidine(34) in elongator tRNA(Met) + AMP + diphosphate. Its function is as follows. Catalyzes the formation of N(4)-acetylcytidine (ac(4)C) at the wobble position of elongator tRNA(Met), using acetate and ATP as substrates. First activates an acetate ion to form acetyladenylate (Ac-AMP) and then transfers the acetyl group to tRNA to form ac(4)C34. The protein is tRNA(Met) cytidine acetate ligase of Oenococcus oeni (strain ATCC BAA-331 / PSU-1).